The sequence spans 237 residues: MAIETFQRGFVLHRKPYSETSLLVDLFTEETGRLTVLAKGARAKRSAWKGVLQPFTPLLLRWSGKGALKTLTKAEPAAIALPLQQTALFSGFYVNELLCRVIEAETPNGELFQDYLHCLTRLASEDGVEPALRTFEFQLLTMLGYGVDFTHCAGSGEPVDEAMTYRYREEKGFTASLIKDNATFYGRDLLAFEARDFRDPAVRSAAKRFTRMALKPYLGNKPLKSRELFAHNILFLK.

It belongs to the RecO family.

In terms of biological role, involved in DNA repair and RecF pathway recombination. The chain is DNA repair protein RecO from Actinobacillus succinogenes (strain ATCC 55618 / DSM 22257 / CCUG 43843 / 130Z).